The following is a 724-amino-acid chain: Propionyl-CoA carboxylase alpha chain, mitochondrial (724 aa).

The 448-residue stretch at 48 to 495 (KFDKILIANR…TTKYLPEVYP (448 aa)) folds into the Biotin carboxylation domain. ATP-binding positions include lysine 163, 195–256 (SRDI…PRHI), glutamate 247, and asparagine 282. The ATP-grasp domain occupies 167–364 (KKIATAARVS…IVQQMLRVSY (198 aa)). Mg(2+) contacts are provided by glutamate 322, glutamate 335, and asparagine 337. Mn(2+) is bound by residues glutamate 322, glutamate 335, and asparagine 337. Residue arginine 339 is part of the active site. Phenylalanine 395 serves as a coordination point for biotin. Residues 649–724 (KAKVDLSTVV…DEGEVLVELE (76 aa)) form the Biotinyl-binding domain. Residue lysine 690 is modified to N6-biotinyllysine.

In terms of assembly, the holoenzyme is a dodecamer composed of 6 alpha subunits and 6 beta subunits. Interacts with sir-2.2 and sir-2.3. It depends on biotin as a cofactor. Mg(2+) serves as cofactor. Mn(2+) is required as a cofactor. The biotin cofactor is covalently attached to the C-terminal biotinyl-binding domain and is required for the catalytic activity.

It localises to the mitochondrion matrix. The catalysed reaction is propanoyl-CoA + hydrogencarbonate + ATP = (S)-methylmalonyl-CoA + ADP + phosphate + H(+). It catalyses the reaction butanoyl-CoA + hydrogencarbonate + ATP = (2S)-ethylmalonyl-CoA + ADP + phosphate + H(+). Its pathway is metabolic intermediate metabolism; propanoyl-CoA degradation; succinyl-CoA from propanoyl-CoA: step 1/3. In terms of biological role, this is one of the 2 subunits of the biotin-dependent propionyl-CoA carboxylase (PCC), a mitochondrial enzyme involved in the catabolism of odd chain fatty acids, branched-chain amino acids isoleucine, threonine, methionine, and valine and other metabolites. Propionyl-CoA carboxylase catalyzes the carboxylation of propionyl-CoA/propanoyl-CoA to D-methylmalonyl-CoA/(S)-methylmalonyl-CoA. Within the holoenzyme, the alpha subunit catalyzes the ATP-dependent carboxylation of the biotin carried by the biotin carboxyl carrier (BCC) domain, while the beta subunit then transfers the carboxyl group from carboxylated biotin to propionyl-CoA. Propionyl-CoA carboxylase also significantly acts on butyryl-CoA/butanoyl-CoA, which is converted to ethylmalonyl-CoA/(2S)-ethylmalonyl-CoA. Other alternative minor substrates include (2E)-butenoyl-CoA/crotonoyl-CoA. The sequence is that of Propionyl-CoA carboxylase alpha chain, mitochondrial (pcca-1) from Caenorhabditis elegans.